A 63-amino-acid chain; its full sequence is MGRIRQTFIKRTGEELIEKFADKFTSDFEENKKAVEEVAMISTKPLRNRIAGYVTAKVKKMNA.

The protein belongs to the eukaryotic ribosomal protein eS17 family.

This is Small ribosomal subunit protein eS17 from Methanococcus maripaludis (strain DSM 14266 / JCM 13030 / NBRC 101832 / S2 / LL).